Here is a 554-residue protein sequence, read N- to C-terminus: Carboxypeptidase Y homolog A (554 aa).

A signal peptide spans 1–17 (MRVAASTVLLGVASAAS). Residues 18 to 137 (FQQQTQHVLS…KLADFNLRVK (120 aa)) constitute a propeptide that is removed on maturation. Cystine bridges form between Cys-191–Cys-431, Cys-325–Cys-339, Cys-349–Cys-372, Cys-356–Cys-365, and Cys-394–Cys-401. Asn-222 is a glycosylation site (N-linked (GlcNAc...) asparagine). Ser-278 is a catalytic residue. Residue Asp-470 is part of the active site. Asn-518 carries N-linked (GlcNAc...) asparagine glycosylation. His-529 is a catalytic residue.

Belongs to the peptidase S10 family.

The protein localises to the vacuole. It carries out the reaction Release of a C-terminal amino acid with broad specificity.. Functionally, vacuolar carboxypeptidase involved in degradation of small peptides. Digests preferentially peptides containing an aliphatic or hydrophobic residue in P1' position, as well as methionine, leucine or phenylalanine in P1 position of ester substrate. This chain is Carboxypeptidase Y homolog A (CPYA), found in Podospora anserina (strain S / ATCC MYA-4624 / DSM 980 / FGSC 10383) (Pleurage anserina).